The primary structure comprises 373 residues: MVSGGGVAAENGEMVGNGEGRKGAGASVLVTGGAGYIGTHTVLRLLEKGFAVTVVDNFHNSVPEALDRVRLIAGAALSARLDFIAGDLKSKDDMEKVFAAKRYDAVIHFAGLKAVGESVAHPQMYYENNVAGTMNLYSAMTKYGCKKIVFSSSATVYGQPEKTPCVEDSKLSALNPYGTTKLVLENYFRQVQAADPEMRVILLRYFNPIGAHRSGDIGEDPRGIPNNLLPYIQQVAVGRRPELNVYGVDYPTRDGTAIRDYIHVVDLADGHIAALEKLFATPDIGCVAYNLGTGCGTTVLEVVKAFEEASGKKIPIKICPRRPGDCTEVYASTDKAKKELGWSARFGIEDMCRDQWNWAKKNPYGYSANAEQN.

27–58 is a binding site for NAD(+); sequence SVLVTGGAGYIGTHTVLRLLEKGFAVTVVDNF. A substrate-binding site is contributed by S153. Y177 acts as the Proton acceptor in catalysis.

Belongs to the NAD(P)-dependent epimerase/dehydratase family. NAD(+) is required as a cofactor.

The enzyme catalyses UDP-alpha-D-glucose = UDP-alpha-D-galactose. It functions in the pathway carbohydrate metabolism; galactose metabolism. Its function is as follows. Catalyzes the interconversion between UDP-glucose and UDP-galactose. The polypeptide is UDP-glucose 4-epimerase 3 (UGE-3) (Oryza sativa subsp. japonica (Rice)).